The sequence spans 570 residues: Urease subunit alpha (570 aa).

One can recognise a Urease domain in the interval 131 to 570; it reads GGFDSHIHFI…LPMAQRYFLF (440 aa). The Ni(2+) site is built by histidine 136, histidine 138, and lysine 219. Lysine 219 carries the N6-carboxylysine modification. Histidine 221 provides a ligand contact to substrate. The Ni(2+) site is built by histidine 248 and histidine 274. Histidine 322 acts as the Proton donor in catalysis. A Ni(2+)-binding site is contributed by aspartate 362.

This sequence belongs to the metallo-dependent hydrolases superfamily. Urease alpha subunit family. In terms of assembly, heterotrimer of UreA (gamma), UreB (beta) and UreC (alpha) subunits. Three heterotrimers associate to form the active enzyme. The cofactor is Ni cation. Carboxylation allows a single lysine to coordinate two nickel ions.

Its subcellular location is the cytoplasm. The catalysed reaction is urea + 2 H2O + H(+) = hydrogencarbonate + 2 NH4(+). It participates in nitrogen metabolism; urea degradation; CO(2) and NH(3) from urea (urease route): step 1/1. The chain is Urease subunit alpha from Beijerinckia indica subsp. indica (strain ATCC 9039 / DSM 1715 / NCIMB 8712).